The sequence spans 569 residues: CUE domain-containing protein 5 (569 aa).

The region spanning 17–60 is the CUE domain; that stretch reads MAEKARATLKEAFPNTDDAIIRAVLAASGYKLEPAFNALLGLSD. Disordered stretches follow at residues 67–139, 175–275, and 311–569; these read MEQA…DDYS, DGEE…SSSA, and EELE…GKET. Positions 79–100 are enriched in basic and acidic residues; that stretch reads AAHDDPVQRQLEEDERCARELA. Over residues 104 to 113 the composition is skewed to basic residues; it reads NSHRPERRRK. The span at 234 to 249 shows a compositional bias: basic and acidic residues; it reads SDPHMLNEKDFERLRL. The segment covering 250 to 274 has biased composition (low complexity); sequence ESSSSPMMRRSSLNSNRRSVESSSS. Residues 329–340 show a composition bias toward basic and acidic residues; the sequence is VVVEKKPDESRK. Positions 347-364 are enriched in polar residues; the sequence is ETVSEEQMGSSNAKSKVL. Composition is skewed to basic and acidic residues over residues 367 to 381, 399 to 500, and 507 to 558; these read EPKD…KTET, ISEK…KETD, and KEEK…KIEE.

Its subcellular location is the cytoplasm. The chain is CUE domain-containing protein 5 from Schizosaccharomyces pombe (strain 972 / ATCC 24843) (Fission yeast).